Here is a 611-residue protein sequence, read N- to C-terminus: Elongation factor 4 (611 aa).

The 183-residue stretch at 11–193 (EKIRNFSIIA…QVVEYVPAPS (183 aa)) folds into the tr-type G domain. GTP contacts are provided by residues 23–28 (DHGKST) and 140–143 (NKID).

This sequence belongs to the TRAFAC class translation factor GTPase superfamily. Classic translation factor GTPase family. LepA subfamily.

Its subcellular location is the cell membrane. The enzyme catalyses GTP + H2O = GDP + phosphate + H(+). Functionally, required for accurate and efficient protein synthesis under certain stress conditions. May act as a fidelity factor of the translation reaction, by catalyzing a one-codon backward translocation of tRNAs on improperly translocated ribosomes. Back-translocation proceeds from a post-translocation (POST) complex to a pre-translocation (PRE) complex, thus giving elongation factor G a second chance to translocate the tRNAs correctly. Binds to ribosomes in a GTP-dependent manner. This chain is Elongation factor 4, found in Enterococcus faecalis (strain ATCC 700802 / V583).